The sequence spans 99 residues: Large ribosomal subunit protein eL21 (99 aa).

Basic residues predominate over residues Met-1–Lys-18. The tract at residues Met-1 to Val-26 is disordered.

This sequence belongs to the eukaryotic ribosomal protein eL21 family.

This chain is Large ribosomal subunit protein eL21, found in Metallosphaera sedula (strain ATCC 51363 / DSM 5348 / JCM 9185 / NBRC 15509 / TH2).